An 89-amino-acid polypeptide reads, in one-letter code: Small ribosomal subunit protein bS20 (89 aa).

The tract at residues 1-27 (MANIKSAKKDSIISEERRKKNASQRSK) is disordered. Over residues 7 to 18 (AKKDSIISEERR) the composition is skewed to basic and acidic residues.

Belongs to the bacterial ribosomal protein bS20 family.

Functionally, binds directly to 16S ribosomal RNA. This Buchnera aphidicola subsp. Schizaphis graminum (strain Sg) protein is Small ribosomal subunit protein bS20.